The chain runs to 48 residues: ATP synthase protein 8 (48 aa).

The helical transmembrane segment at 16-36 threads the bilayer; sequence GFLLMTILLVLFSQFFLPMIL.

The protein belongs to the ATPase protein 8 family. F-type ATPases have 2 components, CF(1) - the catalytic core - and CF(0) - the membrane proton channel.

It is found in the mitochondrion membrane. In terms of biological role, mitochondrial membrane ATP synthase (F(1)F(0) ATP synthase or Complex V) produces ATP from ADP in the presence of a proton gradient across the membrane which is generated by electron transport complexes of the respiratory chain. F-type ATPases consist of two structural domains, F(1) - containing the extramembraneous catalytic core and F(0) - containing the membrane proton channel, linked together by a central stalk and a peripheral stalk. During catalysis, ATP synthesis in the catalytic domain of F(1) is coupled via a rotary mechanism of the central stalk subunits to proton translocation. Part of the complex F(0) domain. Minor subunit located with subunit a in the membrane. The sequence is that of ATP synthase protein 8 (ATP8) from Vanderwaltozyma polyspora (strain ATCC 22028 / DSM 70294 / BCRC 21397 / CBS 2163 / NBRC 10782 / NRRL Y-8283 / UCD 57-17) (Kluyveromyces polysporus).